The following is a 137-amino-acid chain: Putative pre-16S rRNA nuclease (137 aa).

The protein belongs to the YqgF nuclease family.

It localises to the cytoplasm. Functionally, could be a nuclease involved in processing of the 5'-end of pre-16S rRNA. The polypeptide is Putative pre-16S rRNA nuclease (Flavobacterium psychrophilum (strain ATCC 49511 / DSM 21280 / CIP 103535 / JIP02/86)).